A 62-amino-acid polypeptide reads, in one-letter code: Photosystem II reaction center protein K (62 aa).

A propeptide spanning residues 1–25 (MPNILSLTCICFNSVLYPTTSFFFA) is cleaved from the precursor. A helical transmembrane segment spans residues 33–53 (IFNPIVDVMPVIPLFFFLLAF).

The protein belongs to the PsbK family. PSII is composed of 1 copy each of membrane proteins PsbA, PsbB, PsbC, PsbD, PsbE, PsbF, PsbH, PsbI, PsbJ, PsbK, PsbL, PsbM, PsbT, PsbX, PsbY, PsbZ, Psb30/Ycf12, at least 3 peripheral proteins of the oxygen-evolving complex and a large number of cofactors. It forms dimeric complexes.

It is found in the plastid. The protein localises to the chloroplast thylakoid membrane. Its function is as follows. One of the components of the core complex of photosystem II (PSII). PSII is a light-driven water:plastoquinone oxidoreductase that uses light energy to abstract electrons from H(2)O, generating O(2) and a proton gradient subsequently used for ATP formation. It consists of a core antenna complex that captures photons, and an electron transfer chain that converts photonic excitation into a charge separation. The sequence is that of Photosystem II reaction center protein K from Agrostis stolonifera (Creeping bentgrass).